Consider the following 172-residue polypeptide: Large ribosomal subunit protein uL10 (172 aa).

It belongs to the universal ribosomal protein uL10 family. In terms of assembly, part of the ribosomal stalk of the 50S ribosomal subunit. The N-terminus interacts with L11 and the large rRNA to form the base of the stalk. The C-terminus forms an elongated spine to which L12 dimers bind in a sequential fashion forming a multimeric L10(L12)X complex.

Functionally, forms part of the ribosomal stalk, playing a central role in the interaction of the ribosome with GTP-bound translation factors. The sequence is that of Large ribosomal subunit protein uL10 from Rhodopseudomonas palustris (strain BisB5).